The chain runs to 122 residues: Large ribosomal subunit protein uL14 (122 aa).

The protein belongs to the universal ribosomal protein uL14 family. In terms of assembly, part of the 50S ribosomal subunit. Forms a cluster with proteins L3 and L19. In the 70S ribosome, L14 and L19 interact and together make contacts with the 16S rRNA in bridges B5 and B8.

Binds to 23S rRNA. Forms part of two intersubunit bridges in the 70S ribosome. This Bradyrhizobium sp. (strain BTAi1 / ATCC BAA-1182) protein is Large ribosomal subunit protein uL14.